Reading from the N-terminus, the 166-residue chain is Lithostathine-1-beta (166 aa).

Residues 1–22 (MAQTNSFFMLISSLMFLSLSQG) form the signal peptide. The O-linked (GalNAc...) threonine glycan is linked to Thr-27. In terms of domain architecture, C-type lectin spans 34–164 (ISCPEGTNAY…EKKFSFVCKF (131 aa)). Disulfide bonds link Cys-36/Cys-47, Cys-64/Cys-162, and Cys-137/Cys-154.

In terms of processing, all O-linked glycans consist of Gal-GlcNAc-Gal-GalNAc tetrasaccharide core and get elongated (microheterogeneity).

It is found in the secreted. Its function is as follows. Might act as an inhibitor of spontaneous calcium carbonate precipitation. May be associated with neuronal sprouting in brain, and with brain and pancreas regeneration. The chain is Lithostathine-1-beta (REG1B) from Homo sapiens (Human).